Here is a 281-residue protein sequence, read N- to C-terminus: NADPH-dependent 7-cyano-7-deazaguanine reductase (281 aa).

86–88 (IES) contacts substrate. 88–89 (SK) contacts NADPH. Residue Cys189 is the Thioimide intermediate of the active site. Residue Asp196 is the Proton donor of the active site. Substrate is bound at residue 228–229 (HE). 257 to 258 (RG) is an NADPH binding site.

It belongs to the GTP cyclohydrolase I family. QueF type 2 subfamily. In terms of assembly, homodimer.

The protein resides in the cytoplasm. It carries out the reaction 7-aminomethyl-7-carbaguanine + 2 NADP(+) = 7-cyano-7-deazaguanine + 2 NADPH + 3 H(+). The protein operates within tRNA modification; tRNA-queuosine biosynthesis. Catalyzes the NADPH-dependent reduction of 7-cyano-7-deazaguanine (preQ0) to 7-aminomethyl-7-deazaguanine (preQ1). The sequence is that of NADPH-dependent 7-cyano-7-deazaguanine reductase from Mannheimia succiniciproducens (strain KCTC 0769BP / MBEL55E).